Here is an 887-residue protein sequence, read N- to C-terminus: Pre-mRNA-splicing factor cwf22 (887 aa).

The interval 1 to 27 (MEKEDKSFGIGMLDYNRENPESSGHSR) is disordered. The 184-residue stretch at 124 to 307 (KKSINGLINK…EVLFQTRKDK (184 aa)) folds into the MIF4G domain. Residues 366–401 (ILGEEDDDENEEDEEDSEETSESEEDESVNDEKPQV) form a disordered region. Acidic residues predominate over residues 368–394 (GEEDDDENEEDEEDSEETSESEEDESV). One can recognise an MI domain in the interval 411 to 527 (NLRKSIYLTI…GWEVYDCVRL (117 aa)). Disordered regions lie at residues 607–834 (MPKS…KTYH) and 867–887 (GELY…PRAD). The segment covering 618–662 (EGYSSGSETGSTYSSSYSSTYSRGRSYSRSTRSYSKSRSYSRSRS) has biased composition (low complexity). Ser-662 carries the post-translational modification Phosphoserine. Thr-664 carries the phosphothreonine modification. The span at 677–690 (KDRELSPRGRERSS) shows a compositional bias: basic and acidic residues. Low complexity predominate over residues 691-712 (NRNSYSDLSRSSSLSRGRSRSY). The segment covering 717–726 (RLIESEDKGY) has biased composition (basic and acidic residues). Residues 736-746 (RKYRSRQRYRR) are compositionally biased toward basic residues. 2 stretches are compositionally biased toward low complexity: residues 747–762 (SYAG…SRSP) and 769–791 (SMSC…SRSP). Residues 799–809 (DSLSYNRQYSP) show a composition bias toward polar residues.

This sequence belongs to the CWC22 family. As to quaternary structure, belongs to the 40S cdc5-associated complex (or cwf complex), a spliceosome sub-complex reminiscent of a late-stage spliceosome composed of the U2, U5 and U6 snRNAs and at least brr2, cdc5, cwf2/prp3, cwf3/syf1, cwf4/syf3, cwf5/ecm2, spp42/cwf6, cwf7/spf27, cwf8, cwf9, cwf10, cwf11, cwf12, prp45/cwf13, cwf14, cwf15, cwf16, cwf17, cwf18, cwf19, cwf20, cwf21, cwf22, cwf23, cwf24, cwf25, cwf26, cyp7/cwf27, cwf28, cwf29/ist3, lea1, msl1, prp5/cwf1, prp10, prp12/sap130, prp17, prp22, sap61, sap62, sap114, sap145, slu7, smb1, smd1, smd3, smf1, smg1 and syf2.

The protein resides in the cytoplasm. Its subcellular location is the nucleus. Functionally, may be involved in pre-mRNA splicing. The polypeptide is Pre-mRNA-splicing factor cwf22 (cwf22) (Schizosaccharomyces pombe (strain 972 / ATCC 24843) (Fission yeast)).